Consider the following 1166-residue polypeptide: Tectonin beta-propeller repeat-containing protein 1 (1166 aa).

TECPR repeat units follow at residues L209–E240, D254–E285, S301–V332, and D344–V376. S386, S388, S391, S413, and S418 each carry phosphoserine. Residues R404–D496 form a disordered region. Polar residues predominate over residues G407–D416. Residues T451–A462 are compositionally biased toward polar residues. Residues E466–R481 show a composition bias toward basic and acidic residues. The PH domain maps to K616–C722. The TECPR 5 repeat unit spans residues Q734–L761. Phosphoserine is present on S943. TECPR repeat units follow at residues V958 to G989, Y1003 to P1034, T1049 to S1080, and D1092 to I1132.

Belongs to the TECPR1 family. In terms of assembly, interacts with ATG5; the interaction is direct. Interacts with WIPI2. Interacts with the ATG5-ATG12 conjugate, the interaction is however mutually exclusive with ATG16, since it does not interact with ATG12-ATG5-ATG16 complex.

It is found in the cytoplasmic vesicle. It localises to the autophagosome membrane. The protein localises to the lysosome membrane. Tethering factor involved in autophagy. Involved in autophagosome maturation by promoting the autophagosome fusion with lysosomes: acts by associating with both the ATG5-ATG12 conjugate and phosphatidylinositol-3-phosphate (PtdIns(3)P) present at the surface of autophagosomes. Also involved in selective autophagy against bacterial pathogens, by being required for phagophore/preautophagosomal structure biogenesis and maturation. The chain is Tectonin beta-propeller repeat-containing protein 1 (Tecpr1) from Mus musculus (Mouse).